Here is a 434-residue protein sequence, read N- to C-terminus: Galactofuranosyl glycosyltransferase (434 aa).

Topologically, residues 1 to 18 (MAPPRWHHDRRRMAIFVR) are cytoplasmic. A helical; Signal-anchor for type II membrane protein transmembrane segment spans residues 19-38 (VGLYTLLFLMGYVVPLIIFY). 4 N-linked (GlcNAc...) asparagine glycosylation sites follow: N39, N100, N162, and N388. The Lumenal segment spans residues 39-434 (NRSRADTFED…KLLDFPVDPS (396 aa)).

Belongs to the glycosyltransferase 2 family.

It localises to the endoplasmic reticulum membrane. It functions in the pathway glycolipid biosynthesis; glycosylphosphatidylinositol-anchor biosynthesis. Glycosyltransferase that may be responsible for the addition of galactofuranosyl residues to the nascent lipophosphoglycan (LPG) chain. It could alternatively be involved in the synthesis of the galactofuranosyl donor. This is Galactofuranosyl glycosyltransferase (LPG1) from Leishmania donovani.